A 297-amino-acid chain; its full sequence is B-lymphocyte antigen CD20 (297 aa).

Residues 1–56 (MTTPRNSVNGTFPAEPMKGPIAMQSGPKPLFRRMSSLVGPTQSFFMRESKTLGAVQ) lie on the Cytoplasmic side of the membrane. The residue at position 36 (S36) is a Phosphoserine. The helical transmembrane segment at 57–78 (IMNGLFHIALGGLLMIPAGIYA) threads the bilayer. The tract at residues 74-80 (AGIYAPI) is epitope 1. Over 79 to 84 (PICVTV) the chain is Extracellular. Residues 85-105 (WYPLWGGIMYIISGSLLAATE) form a helical membrane-spanning segment. Residues 106–120 (KNSRKCLVKGKMIMN) lie on the Cytoplasmic side of the membrane. C111 carries S-palmitoyl cysteine lipidation. The helical transmembrane segment at 121–141 (SLSLFAAISGMILSIMDILNI) threads the bilayer. The Extracellular portion of the chain corresponds to 142 to 188 (KISHFLKMESLNFIRAHTPYINIYNCEPANPSEKNSPSTQYCYSIQS). An epitope 2 region spans residues 146 to 160 (FLKMESLNFIRAHTP). C167 and C183 are joined by a disulfide. Positions 168–175 (EPANPSEK) are epitope 3 (recognized by antibodies, including Rituximab). Residues 189 to 209 (LFLGILSVMLIFAFFQELVIA) traverse the membrane as a helical segment. The Cytoplasmic segment spans residues 210–297 (GIVENEWKRT…SSPIENDSSP (88 aa)). C220 carries S-palmitoyl cysteine lipidation. S225 carries the post-translational modification Phosphoserine. The residue at position 239 (T239) is a Phosphothreonine. The interval 247–297 (VGLTETSSQPKNEEDIEIIPIQEEEEEETETNFPEPPQDQESSPIENDSSP) is disordered. Residues 260-276 (EDIEIIPIQEEEEEETE) show a composition bias toward acidic residues. Residues 285 to 297 (DQESSPIENDSSP) are compositionally biased toward polar residues.

The protein belongs to the MS4A family. In terms of assembly, forms homotetramers. Interacts with the heavy and light chains of cell surface IgM, the antigen-binding components of the BCR. Post-translationally, phosphorylated on serines and threonines in resting B-cells. Protein kinase C/PKC can use CD20 as substrate. In terms of tissue distribution, expressed on B-cells.

Its subcellular location is the cell membrane. B-lymphocyte-specific membrane protein that plays a role in the regulation of cellular calcium influx necessary for the development, differentiation, and activation of B-lymphocytes. Functions as a store-operated calcium (SOC) channel component promoting calcium influx after activation by the B-cell receptor/BCR. In Homo sapiens (Human), this protein is B-lymphocyte antigen CD20 (MS4A1).